We begin with the raw amino-acid sequence, 116 residues long: Large ribosomal subunit protein bL17 (116 aa).

The protein belongs to the bacterial ribosomal protein bL17 family. Part of the 50S ribosomal subunit. Contacts proteins L3 and L32.

Binds to the 23S rRNA. This chain is Large ribosomal subunit protein bL17, found in Deinococcus radiodurans (strain ATCC 13939 / DSM 20539 / JCM 16871 / CCUG 27074 / LMG 4051 / NBRC 15346 / NCIMB 9279 / VKM B-1422 / R1).